Here is a 297-residue protein sequence, read N- to C-terminus: Tyrosine recombinase XerD (297 aa).

One can recognise a Core-binding (CB) domain in the interval methionine 1–methionine 86. Residues serine 107–lysine 291 form the Tyr recombinase domain. Residues arginine 147, lysine 171, histidine 243, arginine 246, and histidine 269 contribute to the active site. Residue tyrosine 278 is the O-(3'-phospho-DNA)-tyrosine intermediate of the active site.

This sequence belongs to the 'phage' integrase family. XerD subfamily. Forms a cyclic heterotetrameric complex composed of two molecules of XerC and two molecules of XerD.

It localises to the cytoplasm. Functionally, site-specific tyrosine recombinase, which acts by catalyzing the cutting and rejoining of the recombining DNA molecules. The XerC-XerD complex is essential to convert dimers of the bacterial chromosome into monomers to permit their segregation at cell division. It also contributes to the segregational stability of plasmids. This chain is Tyrosine recombinase XerD, found in Listeria innocua serovar 6a (strain ATCC BAA-680 / CLIP 11262).